The sequence spans 286 residues: uncharacterized protein (286 aa).

Disordered stretches follow at residues 1 to 38 (MSQK…EDDV), 108 to 146 (HTGE…RRHK), 196 to 227 (RTQK…KTRL), and 241 to 286 (DVDD…PRSS). The span at 18 to 29 (SSSKQVLSSTSS) shows a compositional bias: low complexity. Positions 243–268 (DDQKKDGSGEEKKEKKSAEKEKKISH) are enriched in basic and acidic residues. Positions 269 to 278 (ENVQSLSPSS) are enriched in polar residues.

This is an uncharacterized protein from Caenorhabditis elegans.